Reading from the N-terminus, the 476-residue chain is Aspartyl/glutamyl-tRNA(Asn/Gln) amidotransferase subunit B (476 aa).

It belongs to the GatB/GatE family. GatB subfamily. Heterotrimer of A, B and C subunits.

The enzyme catalyses L-glutamyl-tRNA(Gln) + L-glutamine + ATP + H2O = L-glutaminyl-tRNA(Gln) + L-glutamate + ADP + phosphate + H(+). It carries out the reaction L-aspartyl-tRNA(Asn) + L-glutamine + ATP + H2O = L-asparaginyl-tRNA(Asn) + L-glutamate + ADP + phosphate + 2 H(+). In terms of biological role, allows the formation of correctly charged Asn-tRNA(Asn) or Gln-tRNA(Gln) through the transamidation of misacylated Asp-tRNA(Asn) or Glu-tRNA(Gln) in organisms which lack either or both of asparaginyl-tRNA or glutaminyl-tRNA synthetases. The reaction takes place in the presence of glutamine and ATP through an activated phospho-Asp-tRNA(Asn) or phospho-Glu-tRNA(Gln). This Lactobacillus gasseri (strain ATCC 33323 / DSM 20243 / BCRC 14619 / CIP 102991 / JCM 1131 / KCTC 3163 / NCIMB 11718 / NCTC 13722 / AM63) protein is Aspartyl/glutamyl-tRNA(Asn/Gln) amidotransferase subunit B.